The following is a 148-amino-acid chain: Protein H2A.6 (148 aa).

A disordered region spans residues 120–148 (GAAEKESTKSPKKKAATKSPKKKTAATKE). 2 consecutive short sequence motifs (SPKK motif) follow at residues 129–132 (SPKK) and 138–141 (SPKK). The span at 129-148 (SPKKKAATKSPKKKTAATKE) shows a compositional bias: basic residues.

This sequence belongs to the histone H2A family. In terms of assembly, the nucleosome is a histone octamer containing two molecules each of H2A, H2B, H3 and H4 assembled in one H3-H4 heterotetramer and two H2A-H2B heterodimers. The octamer wraps approximately 147 bp of DNA. Abundant in meristematic tissues.

It is found in the nucleus. The protein localises to the chromosome. Functionally, core component of nucleosome. Nucleosomes wrap and compact DNA into chromatin, limiting DNA accessibility to the cellular machineries which require DNA as a template. Histones thereby play a central role in transcription regulation, DNA repair, DNA replication and chromosomal stability. DNA accessibility is regulated via a complex set of post-translational modifications of histones, also called histone code, and nucleosome remodeling. The chain is Protein H2A.6 (H2A-3) from Triticum aestivum (Wheat).